The primary structure comprises 362 residues: Chorismate synthase (362 aa).

NADP(+) is bound by residues Arg48 and Arg54. FMN contacts are provided by residues 131 to 133 (RSS), 243 to 244 (NA), Gly287, 302 to 306 (KPTSS), and Arg328.

It belongs to the chorismate synthase family. In terms of assembly, homotetramer. FMNH2 is required as a cofactor.

The enzyme catalyses 5-O-(1-carboxyvinyl)-3-phosphoshikimate = chorismate + phosphate. It functions in the pathway metabolic intermediate biosynthesis; chorismate biosynthesis; chorismate from D-erythrose 4-phosphate and phosphoenolpyruvate: step 7/7. Its function is as follows. Catalyzes the anti-1,4-elimination of the C-3 phosphate and the C-6 proR hydrogen from 5-enolpyruvylshikimate-3-phosphate (EPSP) to yield chorismate, which is the branch point compound that serves as the starting substrate for the three terminal pathways of aromatic amino acid biosynthesis. This reaction introduces a second double bond into the aromatic ring system. This Rhodopseudomonas palustris (strain BisB18) protein is Chorismate synthase.